Here is a 234-residue protein sequence, read N- to C-terminus: Purine nucleoside phosphorylase DeoD-type (234 aa).

H5 contributes to the a purine D-ribonucleoside binding site. Phosphate-binding positions include G21, R25, R44, and 88–91 (RIGS). Residues 180–182 (EME) and 204–205 (SD) each bind a purine D-ribonucleoside. Catalysis depends on D205, which acts as the Proton donor.

Belongs to the PNP/UDP phosphorylase family. In terms of assembly, homohexamer; trimer of homodimers.

It catalyses the reaction a purine D-ribonucleoside + phosphate = a purine nucleobase + alpha-D-ribose 1-phosphate. It carries out the reaction a purine 2'-deoxy-D-ribonucleoside + phosphate = a purine nucleobase + 2-deoxy-alpha-D-ribose 1-phosphate. Catalyzes the reversible phosphorolytic breakdown of the N-glycosidic bond in the beta-(deoxy)ribonucleoside molecules, with the formation of the corresponding free purine bases and pentose-1-phosphate. This is Purine nucleoside phosphorylase DeoD-type from Colwellia psychrerythraea (strain 34H / ATCC BAA-681) (Vibrio psychroerythus).